Consider the following 33-residue polypeptide: Dermaseptin-J7 (33 aa).

Val-33 carries the post-translational modification Valine amide.

In terms of tissue distribution, expressed by the skin glands.

The protein localises to the secreted. In terms of biological role, has antimicrobial activity. The chain is Dermaseptin-J7 from Phasmahyla jandaia (Jandaia leaf frog).